A 137-amino-acid polypeptide reads, in one-letter code: Flavodoxin (137 aa).

The 136-residue stretch at 2-137 folds into the Flavodoxin-like domain; that stretch reads VEIVYWSGTG…KELGEAAAKA (136 aa).

Belongs to the flavodoxin family. The cofactor is FMN.

Its function is as follows. Low-potential electron donor to a number of redox enzymes. This chain is Flavodoxin, found in Megasphaera elsdenii.